The following is a 267-amino-acid chain: Putative transcription factor Ovo-like 1 (267 aa).

C2H2-type zinc fingers lie at residues 118–140, 146–168, 174–197, and 213–236; these read FTCH…MKCH, HLCT…VRTH, YKCS…KKIH, and YVCE…KERH.

As to expression, expressed in skin, testis, kidney and weakly in lung. Not detected in heart, brain, spleen, liver and skeletal muscle.

It localises to the nucleus. Functionally, putative transcription factor. Involved in hair formation and spermatogenesis. May function in the differentiation and/or maintenance of the urogenital system. The chain is Putative transcription factor Ovo-like 1 (Ovol1) from Mus musculus (Mouse).